The sequence spans 373 residues: tRNA-specific 2-thiouridylase MnmA (373 aa).

ATP contacts are provided by residues 12-19 and methionine 38; that span reads GMSGGVDS. Residues 98 to 100 are interaction with target base in tRNA; sequence NPD. The Nucleophile role is filled by cysteine 103. A disulfide bond links cysteine 103 and cysteine 200. Glycine 127 is an ATP binding site. Residues 150–152 are interaction with tRNA; that stretch reads KDQ. Cysteine 200 serves as the catalytic Cysteine persulfide intermediate. The interval 312–313 is interaction with tRNA; sequence RY.

The protein belongs to the MnmA/TRMU family.

Its subcellular location is the cytoplasm. It catalyses the reaction S-sulfanyl-L-cysteinyl-[protein] + uridine(34) in tRNA + AH2 + ATP = 2-thiouridine(34) in tRNA + L-cysteinyl-[protein] + A + AMP + diphosphate + H(+). Its function is as follows. Catalyzes the 2-thiolation of uridine at the wobble position (U34) of tRNA, leading to the formation of s(2)U34. This chain is tRNA-specific 2-thiouridylase MnmA, found in Streptococcus pneumoniae serotype 19F (strain G54).